We begin with the raw amino-acid sequence, 387 residues long: Alanine racemase (387 aa).

Lys-48 (proton acceptor; specific for D-alanine) is an active-site residue. Lys-48 is modified (N6-(pyridoxal phosphate)lysine). Position 146 (Arg-146) interacts with substrate. Tyr-267 functions as the Proton acceptor; specific for L-alanine in the catalytic mechanism. Met-315 serves as a coordination point for substrate.

This sequence belongs to the alanine racemase family. Requires pyridoxal 5'-phosphate as cofactor.

The enzyme catalyses L-alanine = D-alanine. Its pathway is amino-acid biosynthesis; D-alanine biosynthesis; D-alanine from L-alanine: step 1/1. Its function is as follows. Catalyzes the interconversion of L-alanine and D-alanine. May also act on other amino acids. The polypeptide is Alanine racemase (alr) (Methylacidiphilum infernorum (isolate V4) (Methylokorus infernorum (strain V4))).